The primary structure comprises 122 residues: Holo-[acyl-carrier-protein] synthase (122 aa).

Residues aspartate 8 and glutamate 56 each coordinate Mg(2+).

The protein belongs to the P-Pant transferase superfamily. AcpS family. It depends on Mg(2+) as a cofactor.

It localises to the cytoplasm. The enzyme catalyses apo-[ACP] + CoA = holo-[ACP] + adenosine 3',5'-bisphosphate + H(+). In terms of biological role, transfers the 4'-phosphopantetheine moiety from coenzyme A to a Ser of acyl-carrier-protein. This Streptomyces griseus subsp. griseus (strain JCM 4626 / CBS 651.72 / NBRC 13350 / KCC S-0626 / ISP 5235) protein is Holo-[acyl-carrier-protein] synthase.